A 908-amino-acid chain; its full sequence is DNA mismatch repair protein MutS (908 aa).

An ATP-binding site is contributed by 662 to 669 (GPNMGGKS).

This sequence belongs to the DNA mismatch repair MutS family.

Its function is as follows. This protein is involved in the repair of mismatches in DNA. It is possible that it carries out the mismatch recognition step. This protein has a weak ATPase activity. The sequence is that of DNA mismatch repair protein MutS from Rhizobium etli (strain ATCC 51251 / DSM 11541 / JCM 21823 / NBRC 15573 / CFN 42).